Consider the following 129-residue polypeptide: Small ribosomal subunit protein uS11 (129 aa).

This sequence belongs to the universal ribosomal protein uS11 family. As to quaternary structure, part of the 30S ribosomal subunit. Interacts with proteins S7 and S18. Binds to IF-3.

Located on the platform of the 30S subunit, it bridges several disparate RNA helices of the 16S rRNA. Forms part of the Shine-Dalgarno cleft in the 70S ribosome. The polypeptide is Small ribosomal subunit protein uS11 (Azorhizobium caulinodans (strain ATCC 43989 / DSM 5975 / JCM 20966 / LMG 6465 / NBRC 14845 / NCIMB 13405 / ORS 571)).